Consider the following 226-residue polypeptide: Ribonuclease S-7 (226 aa).

The signal sequence occupies residues 1 to 27; sequence MGITGMIYIVTMVFSLIVLILSSSTVG. Gln-36 serves as a coordination point for RNA. Cys-42 and Cys-49 form a disulfide bridge. Residue His-60 participates in RNA binding. The active-site Proton donor is the His-60. Residues Asn-74 and Asn-77 are each glycosylated (N-linked (GlcNAc...) asparagine; alternate). Cys-75 and Cys-119 are disulfide-bonded. RNA contacts are provided by residues 98 to 99, Phe-108, 111 to 112, and 115 to 116; these read NV, KQ, and KH. The active site involves Gln-112. His-116 functions as the Proton acceptor in the catalytic mechanism. N-linked (GlcNAc...) asparagine glycosylation is found at Asn-126, Asn-144, and Asn-172. Cystine bridges form between Cys-183/Cys-220 and Cys-198/Cys-209.

It belongs to the RNase T2 family. Post-translationally, the N-glycans attached at Asn-74 and Asn-77 consist of either monosaccharide (GlcNAc) or disaccharide (GlcNAc-GlcNAc) that could not be distinguished. The N-glycan at Asn-144 contains mannose and xylose, and at Asn-126 contains mannose, xylose and fucose. The N-glycan at Asn-172 consists of disaccharide (GlcNAc-GlcNAc).

The catalysed reaction is a ribonucleotidyl-ribonucleotide-RNA + H2O = a 3'-end 3'-phospho-ribonucleotide-RNA + a 5'-end dephospho-ribonucleoside-RNA + H(+). In terms of biological role, self-incompatibility (SI) is the inherited ability of a flowering plant to prevent self-fertilization by discriminating between self and non-self pollen during pollination. In many species, self-incompatibility is controlled by the single, multiallelic locus S. This chain is Ribonuclease S-7, found in Pyrus pyrifolia (Chinese pear).